We begin with the raw amino-acid sequence, 209 residues long: Large ribosomal subunit protein uL3 (209 aa).

Gln150 is modified (N5-methylglutamine).

Belongs to the universal ribosomal protein uL3 family. As to quaternary structure, part of the 50S ribosomal subunit. Forms a cluster with proteins L14 and L19. Post-translationally, methylated by PrmB.

Its function is as follows. One of the primary rRNA binding proteins, it binds directly near the 3'-end of the 23S rRNA, where it nucleates assembly of the 50S subunit. In Ectopseudomonas mendocina (strain ymp) (Pseudomonas mendocina), this protein is Large ribosomal subunit protein uL3.